The chain runs to 177 residues: MDFSDLDYSDAGDSGWTMYLGHSSSVSLHHFDYHNGETKQEHDEDSSMVSDASSGPPYYCEETVHEDHLQQNTQYWCKSKSKNKNKNKKKVHEEQGYSERFNSSFDDTASSLPVGEEVSAHKQHQNQYQRFHDFCQSYSTRRICKEKVNSGFLQQAFPVDKLALDNQGGDNQRKRRG.

The SOFL-A motif lies at 14–19; sequence SGWTMY. 2 disordered regions span residues 37–60 and 78–104; these read ETKQ…PYYC and KSKS…FNSS. The SOFL-B signature appears at 47–56; sequence SMVSDASSGP. Basic residues predominate over residues 79–90; that stretch reads SKSKNKNKNKKK.

This sequence belongs to the SOFL plant protein family. In terms of tissue distribution, expressed in seedlings, flowers and siliques. Barely detectable in roots and leaves.

The protein localises to the cytoplasm. Its subcellular location is the nucleus. Its function is as follows. Involved in cytokinin-mediated development. This is Protein SOB FIVE-LIKE 6 from Arabidopsis thaliana (Mouse-ear cress).